The primary structure comprises 164 residues: Interleukin-10 (164 aa).

Positions 1–18 are cleaved as a signal peptide; that stretch reads MPSSALLCCLIFLARVAA. 2 disulfide bridges follow: Cys30/Cys126 and Cys80/Cys132. A glycan (N-linked (GlcNAc...) asparagine) is linked at Asn134.

It belongs to the IL-10 family. Homodimer. Interacts with IL10RA and IL10RB.

The protein resides in the secreted. In terms of biological role, major immune regulatory cytokine that acts on many cells of the immune system where it has profound anti-inflammatory functions, limiting excessive tissue disruption caused by inflammation. Mechanistically, IL10 binds to its heterotetrameric receptor comprising IL10RA and IL10RB leading to JAK1 and STAT2-mediated phosphorylation of STAT3. In turn, STAT3 translocates to the nucleus where it drives expression of anti-inflammatory mediators. Targets antigen-presenting cells (APCs) such as macrophages and monocytes and inhibits their release of pro-inflammatory cytokines including granulocyte-macrophage colony-stimulating factor /GM-CSF, granulocyte colony-stimulating factor/G-CSF, IL-1 alpha, IL-1 beta, IL-6, IL-8 and TNF-alpha. Also interferes with antigen presentation by reducing the expression of MHC-class II and co-stimulatory molecules, thereby inhibiting their ability to induce T cell activation. In addition, controls the inflammatory response of macrophages by reprogramming essential metabolic pathways including mTOR signaling. This Orcinus orca (Killer whale) protein is Interleukin-10 (IL10).